The primary structure comprises 688 residues: Glycine--tRNA ligase beta subunit (688 aa).

Belongs to the class-II aminoacyl-tRNA synthetase family. Tetramer of two alpha and two beta subunits.

The protein localises to the cytoplasm. The enzyme catalyses tRNA(Gly) + glycine + ATP = glycyl-tRNA(Gly) + AMP + diphosphate. The protein is Glycine--tRNA ligase beta subunit of Clostridioides difficile (strain 630) (Peptoclostridium difficile).